An 87-amino-acid chain; its full sequence is Large ribosomal subunit protein eL20 (87 aa).

It belongs to the eukaryotic ribosomal protein eL20 family. In terms of assembly, part of the 50S ribosomal subunit. Binds 23S rRNA.

In Staphylothermus marinus (strain ATCC 43588 / DSM 3639 / JCM 9404 / F1), this protein is Large ribosomal subunit protein eL20.